A 168-amino-acid chain; its full sequence is Transcriptional regulator MraZ (168 aa).

SpoVT-AbrB domains lie at 8-51 (EYNQ…GGDR) and 90-140 (ALNM…KADT).

The protein belongs to the MraZ family. In terms of assembly, forms oligomers.

The protein resides in the cytoplasm. It localises to the nucleoid. The sequence is that of Transcriptional regulator MraZ from Cereibacter sphaeroides (strain ATCC 17029 / ATH 2.4.9) (Rhodobacter sphaeroides).